We begin with the raw amino-acid sequence, 415 residues long: MDPEGFTSGLFRWNPTRVMVQAPTPIPPPQQQSPATPQTAAFGMRLGGLEGLFGPYGVRFYTAAKIAELGFTASTLVGMKDEELEDMMNSLSHIFRWELLVGERYGIKAAVRAERRRLQEEEEEESSRRRHLLLSAAGDSGTHLALDALSQEDDWTGLSQEPVQHQDQTDAAGINGGGRGGYWEAGQTTIKKQQQRRRKKRLYVSETDDDGNEGEDDDGMDIVNGSGVGMERQREHPFIVTEPGEVARGKKNGLDYLFHLYEQCREFLLQVQTIAKDRGEKCPTKVTNQVFRYAKKSGANYINKPKMRHYVHCYALHCLDEEASNALRSAFKVRGENVGSWRQACYKPLVDIACRHGWDIDAVFNAHPRLSIWYVPTKLRQLCHLERNNAEAAAATLVGGISCRDRLRLDALGFN.

The segment at 159 to 221 (SQEPVQHQDQ…NEGEDDDGMD (63 aa)) is disordered. The span at 174 to 183 (INGGGRGGYW) shows a compositional bias: gly residues. Over residues 193-202 (QQQRRRKKRL) the composition is skewed to basic residues. A compositionally biased stretch (acidic residues) spans 206 to 220 (ETDDDGNEGEDDDGM). 3 consecutive DNA-binding regions follow at residues 234-238 (REHPF), 303-310 (NKPKMRHY), and 374-377 (YVPT).

It belongs to the FLO/LFY family. As to expression, acts in the floral primordia.

It localises to the nucleus. Controls floral meristem identity. Is required very early in flower development and may act here as a transcription factor. This is Putative transcription factor BOFH from Brassica oleracea var. botrytis (Cauliflower).